Consider the following 319-residue polypeptide: 4-diphosphocytidyl-2-C-methyl-D-erythritol kinase (319 aa).

K21 is a catalytic residue. 106–116 (PIGAGLAGGSS) serves as a coordination point for ATP. D148 is a catalytic residue.

The protein belongs to the GHMP kinase family. IspE subfamily.

The enzyme catalyses 4-CDP-2-C-methyl-D-erythritol + ATP = 4-CDP-2-C-methyl-D-erythritol 2-phosphate + ADP + H(+). It functions in the pathway isoprenoid biosynthesis; isopentenyl diphosphate biosynthesis via DXP pathway; isopentenyl diphosphate from 1-deoxy-D-xylulose 5-phosphate: step 3/6. Catalyzes the phosphorylation of the position 2 hydroxy group of 4-diphosphocytidyl-2C-methyl-D-erythritol. The sequence is that of 4-diphosphocytidyl-2-C-methyl-D-erythritol kinase from Prochlorococcus marinus (strain MIT 9313).